The following is a 366-amino-acid chain: 1-aminocyclopropane-1-carboxylate oxidase homolog 12 (366 aa).

In terms of domain architecture, Fe2OG dioxygenase spans 215 to 314 (KTLLMICHYY…RISVASFFSS (100 aa)). Fe cation is bound by residues H239, D241, and H295. 2-oxoglutarate is bound at residue R305.

This sequence belongs to the iron/ascorbate-dependent oxidoreductase family. Requires Fe(2+) as cofactor.

The chain is 1-aminocyclopropane-1-carboxylate oxidase homolog 12 from Arabidopsis thaliana (Mouse-ear cress).